Consider the following 114-residue polypeptide: MEKPLFPLVPLHWFGFGYTALVVSGGIVGYVKTGRAPSLAAGLLFGSLAGVGAYQLYQDPRNVWDFLAATSVTFVGIMGMRSYYYGKFMPVGLIAGASLLMAAKVGVRMLMTSD.

4 helical membrane-spanning segments follow: residues 8–28 (LVPL…GGIV), 36–56 (APSL…AYQL), 63–80 (VWDF…IMGM), and 83–103 (YYYG…LMAA).

It belongs to the TMEM14 family.

It is found in the membrane. The chain is Transmembrane protein 14DP (TMEM14DP) from Homo sapiens (Human).